Reading from the N-terminus, the 359-residue chain is Structure-specific endonuclease subunit SLX1 homolog (359 aa).

A GIY-YIG domain is found at 9 to 91 (GLFACYCLVA…TYPTRSRYVN (83 aa)). The SLX1-type zinc-finger motif lies at 192 to 238 (CPICQDGVSPSNVQCMQCSARFCITCAGKLFTRRNTLIPCFGKCPIC). The interval 256 to 359 (VAGRKSVPHK…LPSDVISITD (104 aa)) is disordered. Residues 269 to 281 (VDGQSSLSQNSSY) show a composition bias toward polar residues. Over residues 295–306 (EPEKDDISRDES) the composition is skewed to basic and acidic residues. The segment covering 316–326 (SSVALSDSSRS) has biased composition (low complexity).

This sequence belongs to the SLX1 family. Forms a heterodimer with a member of the SLX4 family. Requires a divalent metal cation as cofactor.

The protein resides in the nucleus. In terms of biological role, catalytic subunit of a heterodimeric structure-specific endonuclease that resolves DNA secondary structures generated during DNA repair and recombination. Has endonuclease activity towards branched DNA substrates, introducing single-strand cuts in duplex DNA close to junctions with ss-DNA. The protein is Structure-specific endonuclease subunit SLX1 homolog of Giardia intestinalis (strain ATCC 50803 / WB clone C6) (Giardia lamblia).